The primary structure comprises 977 residues: MDEELYSRQLYVLGLPAMQRIQEAKVLLCGLQGLGAEVAKNLVLTGVGSLTLHDPHPTCWADLAAQCFLSEESLGRNRAEASQAQLAQLNEAVQISVHSGDITEDLLQGFQVVVLTDSKLEDQLKVGPLCHKHGVRFLMAETRGLVGRLFCDFGEDFTVLDPTEVEPMTAAIQDISQGFPGIVTLRGDTKRHSFHDGDLVIFSDIEGMVELNSCSPQSVRVQKDGSLEIGDTTTFSRYLRGGVVTEVKRPKTVRHKPLDIALLQPHVVAQNTQEVQRAHCLHQAFHVLHKFQQLHGRLPKPWDPDDAETVVELAQDLEPLKGTEEESLDEALLRTIALSSAGTLSPMAAIMGGVAAQEVLKAISRKFMPLDQWLYFDALECLPEDETLLPSPEDCQPRNCRYDGQIAVFGTDLQEKLSDQHYLLVGAGAIGCEMLKVFALVGLGVRANGGVTVADMDYIERSNLSRQFLFRPKDVRRPKAEVAAAAAHRLNPDLRATPYTCPLDPTTEDIYDDSFFSRVNGVVAALDSFQARHYVAARCTHYLKPLLEAGTQGTWGSASVFVPYVTEAYRGPASDAASEDAPYPVCTLRHIPSSMEHSVQWAQDQFEGLFRLSTETINCYQQTCTSLSATDRTETLALLQQVMGVLRTRPQTWQDCVVWALGHWQLCFHDKVLEGGTQFSSGSNKCPHPLQFDPNHDMHFLYVLAAANLYARMHGLPGSQSQPALRELLTRLLESDSRPQNLFSAEHGQEQLKELQETLDDWRKGPPLKPVLFVKDDDSNFHVDFVVAATDLRCQNYGILPVNHARIKQIVGRIIPAIATSTAVVAGLLGLELYKVVSGLRSHGTFRHSYLHLAENHFIRSAPSAPAVQSFRDLKWTCWDRLKVPAVQPERTLKSLLAHLQEEHGLKVEMLLHHQALLYSSGWSSEKQAQHLCLRVTELVQHVTGWKPKPGLKVLVFELSCEGEEEEMAFPPLHYEL.

Belongs to the ubiquitin-activating E1 family. Ubiquitinated by RNF170.

Its subcellular location is the cytoplasm. The protein localises to the nucleus. Its pathway is protein modification; protein ubiquitination. Its function is as follows. E1-activating enzyme that catalyzes the covalent conjugation of the ubiquitin-like protein product of ISG15 to additional interferons stimulated proteins (ISGs) as well as other cellular proteins such as P53 in a process termed protein ISGylation. Plays an essential role in antiviral immunity together with ISG15 by restricting the replication of many viruses including rabies virus, influenza virus, sindbis virus or rotavirus. The protein is Ubiquitin-like modifier-activating enzyme 7 of Mus musculus (Mouse).